Consider the following 181-residue polypeptide: UPF0302 protein lin2035 (181 aa).

It belongs to the UPF0302 family.

The sequence is that of UPF0302 protein lin2035 from Listeria innocua serovar 6a (strain ATCC BAA-680 / CLIP 11262).